Reading from the N-terminus, the 144-residue chain is Endoribonuclease YbeY (144 aa).

His105, His109, and Asp115 together coordinate Zn(2+).

It belongs to the endoribonuclease YbeY family. Zn(2+) serves as cofactor.

The protein resides in the cytoplasm. Functionally, single strand-specific metallo-endoribonuclease involved in late-stage 70S ribosome quality control and in maturation of the 3' terminus of the 16S rRNA. The sequence is that of Endoribonuclease YbeY from Chlorobium limicola (strain DSM 245 / NBRC 103803 / 6330).